The primary structure comprises 292 residues: Phosphoribulokinase, plasmid (292 aa).

12 to 20 (GSSGAGTTS) is a binding site for ATP.

This sequence belongs to the phosphoribulokinase family. In terms of assembly, homooctamer.

The enzyme catalyses D-ribulose 5-phosphate + ATP = D-ribulose 1,5-bisphosphate + ADP + H(+). Its pathway is carbohydrate biosynthesis; Calvin cycle. The polypeptide is Phosphoribulokinase, plasmid (cfxP) (Cupriavidus necator (strain ATCC 17699 / DSM 428 / KCTC 22496 / NCIMB 10442 / H16 / Stanier 337) (Ralstonia eutropha)).